Reading from the N-terminus, the 535-residue chain is Light-independent protochlorophyllide reductase subunit B (535 aa).

Position 36 (D36) interacts with [4Fe-4S] cluster. Residue D292 is the Proton donor of the active site. G428–L429 is a binding site for substrate.

This sequence belongs to the ChlB/BchB/BchZ family. As to quaternary structure, protochlorophyllide reductase is composed of three subunits; BchL, BchN and BchB. Forms a heterotetramer of two BchB and two BchN subunits. [4Fe-4S] cluster is required as a cofactor.

It carries out the reaction chlorophyllide a + oxidized 2[4Fe-4S]-[ferredoxin] + 2 ADP + 2 phosphate = protochlorophyllide a + reduced 2[4Fe-4S]-[ferredoxin] + 2 ATP + 2 H2O. It functions in the pathway porphyrin-containing compound metabolism; bacteriochlorophyll biosynthesis (light-independent). In terms of biological role, component of the dark-operative protochlorophyllide reductase (DPOR) that uses Mg-ATP and reduced ferredoxin to reduce ring D of protochlorophyllide (Pchlide) to form chlorophyllide a (Chlide). This reaction is light-independent. The NB-protein (BchN-BchB) is the catalytic component of the complex. The chain is Light-independent protochlorophyllide reductase subunit B from Pelodictyon phaeoclathratiforme (strain DSM 5477 / BU-1).